Consider the following 249-residue polypeptide: 3-deoxy-manno-octulosonate cytidylyltransferase (249 aa).

It belongs to the KdsB family.

It localises to the cytoplasm. The catalysed reaction is 3-deoxy-alpha-D-manno-oct-2-ulosonate + CTP = CMP-3-deoxy-beta-D-manno-octulosonate + diphosphate. Its pathway is nucleotide-sugar biosynthesis; CMP-3-deoxy-D-manno-octulosonate biosynthesis; CMP-3-deoxy-D-manno-octulosonate from 3-deoxy-D-manno-octulosonate and CTP: step 1/1. The protein operates within bacterial outer membrane biogenesis; lipopolysaccharide biosynthesis. Its function is as follows. Activates KDO (a required 8-carbon sugar) for incorporation into bacterial lipopolysaccharide in Gram-negative bacteria. This chain is 3-deoxy-manno-octulosonate cytidylyltransferase, found in Oleidesulfovibrio alaskensis (strain ATCC BAA-1058 / DSM 17464 / G20) (Desulfovibrio alaskensis).